The primary structure comprises 481 residues: 3-isopropylmalate dehydratase large subunit (481 aa).

Cys-357, Cys-417, and Cys-420 together coordinate [4Fe-4S] cluster. The segment covering 429–441 (SPGQRCASTSNRN) has biased composition (polar residues). The disordered stretch occupies residues 429–451 (SPGQRCASTSNRNFEGRQGKGGR).

The protein belongs to the aconitase/IPM isomerase family. LeuC type 1 subfamily. As to quaternary structure, heterodimer of LeuC and LeuD. [4Fe-4S] cluster is required as a cofactor.

The enzyme catalyses (2R,3S)-3-isopropylmalate = (2S)-2-isopropylmalate. Its pathway is amino-acid biosynthesis; L-leucine biosynthesis; L-leucine from 3-methyl-2-oxobutanoate: step 2/4. In terms of biological role, catalyzes the isomerization between 2-isopropylmalate and 3-isopropylmalate, via the formation of 2-isopropylmaleate. This is 3-isopropylmalate dehydratase large subunit from Mycobacterium sp. (strain KMS).